Consider the following 171-residue polypeptide: Large ribosomal subunit protein uL10 (171 aa).

The protein belongs to the universal ribosomal protein uL10 family. As to quaternary structure, part of the ribosomal stalk of the 50S ribosomal subunit. The N-terminus interacts with L11 and the large rRNA to form the base of the stalk. The C-terminus forms an elongated spine to which L12 dimers bind in a sequential fashion forming a multimeric L10(L12)X complex.

Forms part of the ribosomal stalk, playing a central role in the interaction of the ribosome with GTP-bound translation factors. This is Large ribosomal subunit protein uL10 from Nitrosomonas europaea (strain ATCC 19718 / CIP 103999 / KCTC 2705 / NBRC 14298).